We begin with the raw amino-acid sequence, 598 residues long: Acetylcholine receptor subunit alpha-type acr-5 (598 aa).

The signal sequence occupies residues 1-16; the sequence is MLPNIILILLIRYCSC. The Extracellular portion of the chain corresponds to 17–323; sequence GAGSRVYEKY…HLVIRRKPLY (307 aa). N-linked (GlcNAc...) asparagine glycans are attached at residues asparagine 54, asparagine 71, asparagine 77, asparagine 134, asparagine 178, and asparagine 252. A helical transmembrane segment spans residues 324–344; it reads YMINLVVPTSIITIVAVTGFF. Over 345 to 356 the chain is Cytoplasmic; the sequence is TPTSSSSERDEK. Residues 357–377 form a helical membrane-spanning segment; sequence LYLGINTLLTMSVMMLMVCNQ. The Extracellular portion of the chain corresponds to 378 to 391; the sequence is MPSTSTYVPLMSWY. Residues 392–412 traverse the membrane as a helical segment; that stretch reads YIGIIMVIVVGTFLATGVLAI. At 413–563 the chain is on the cytoplasmic side; the sequence is HGQKHYNKPI…WEFLANVLDR (151 aa). A helical transmembrane segment spans residues 564 to 584; that stretch reads ILLTIFCGFTFAVFIILIGFD. Over 585–598 the chain is Extracellular; sequence SFFTFHTDSPPKTM.

Belongs to the ligand-gated ion channel (TC 1.A.9) family. Acetylcholine receptor (TC 1.A.9.1) subfamily.

The protein resides in the postsynaptic cell membrane. It localises to the cell membrane. Its function is as follows. Subunit of nicotinic acetylcholine receptor (nAChR). Involved in nAChR sensitivity to nicotine. Modulates locomotion towards the drug nicotine. This Caenorhabditis elegans protein is Acetylcholine receptor subunit alpha-type acr-5.